The chain runs to 410 residues: Aspartic proteinase Asp1 (410 aa).

A signal peptide spans 1 to 23 (MTARLALLASLLLLLQLVPPSSA). A propeptide spans 24-46 (VVLELHGNVYPIGHFFVTMNIGD) (removed in mature form). One can recognise a Peptidase A1 domain in the interval 38-392 (FFVTMNIGDP…DSERSLLGWV (355 aa)). Active-site residues include Asp56 and Asp257.

It belongs to the peptidase A1 family. As to expression, expressed in pollen, nucellus, ovary wall, shoot and root meristem, coleoptiles of immature seeds, and somatic embryos.

Possesses protease activity in vitro. The chain is Aspartic proteinase Asp1 (ASP1) from Oryza sativa subsp. indica (Rice).